The following is a 122-amino-acid chain: Selenoprotein H (122 aa).

K20 is subject to N6-acetyllysine. The cysteinyl-selenocysteine (Cys-Sec); redox-active cross-link spans 41–44 (CTSU). A non-standard amino acid (selenocysteine) is located at residue U44.

Belongs to the SelWTH family.

Functionally, may be involved in a redox-related process. The sequence is that of Selenoprotein H from Homo sapiens (Human).